A 616-amino-acid polypeptide reads, in one-letter code: Glucoamylase P (616 aa).

Residues 1–29 (MRLLPSSCAGALSLLCSLAIAAPTELKAR) form the signal peptide. Trp-149 provides a ligand contact to substrate. N-linked (GlcNAc...) asparagine glycosylation is present at Asn-200. Asp-205 (proton acceptor) is an active-site residue. Residue Glu-208 is the Proton donor of the active site. Asn-427 is a glycosylation site (N-linked (GlcNAc...) asparagine). A CBM20 domain is found at 501-608 (VTSSCQVSIT…AVTTDDAWMG (108 aa)).

This sequence belongs to the glycosyl hydrolase 15 family.

The protein localises to the secreted. It carries out the reaction Hydrolysis of terminal (1-&gt;4)-linked alpha-D-glucose residues successively from non-reducing ends of the chains with release of beta-D-glucose.. This is Glucoamylase P (GAMP) from Amorphotheca resinae (Creosote fungus).